The chain runs to 819 residues: Meiotically up-regulated gene 45 protein (819 aa).

A helical transmembrane segment spans residues 797-817; the sequence is AMCLLTLLIGIYLILQVVFIY.

It is found in the membrane. Functionally, has a role in meiosis. The protein is Meiotically up-regulated gene 45 protein (mug45) of Schizosaccharomyces pombe (strain 972 / ATCC 24843) (Fission yeast).